The following is a 297-amino-acid chain: Tyrosine recombinase XerD (297 aa).

The Core-binding (CB) domain maps to 1 to 86 (MNDLIDDFLH…SLRSFFHYLM (86 aa)). Positions 107 to 291 (SLPKVLNLDD…TKLRLKDVYK (185 aa)) constitute a Tyr recombinase domain. Active-site residues include Arg147, Lys171, His243, Arg246, and His269. Residue Tyr278 is the O-(3'-phospho-DNA)-tyrosine intermediate of the active site.

Belongs to the 'phage' integrase family. XerD subfamily. As to quaternary structure, forms a cyclic heterotetrameric complex composed of two molecules of XerC and two molecules of XerD.

It is found in the cytoplasm. In terms of biological role, site-specific tyrosine recombinase, which acts by catalyzing the cutting and rejoining of the recombining DNA molecules. The XerC-XerD complex is essential to convert dimers of the bacterial chromosome into monomers to permit their segregation at cell division. It also contributes to the segregational stability of plasmids. In Listeria innocua serovar 6a (strain ATCC BAA-680 / CLIP 11262), this protein is Tyrosine recombinase XerD.